A 337-amino-acid polypeptide reads, in one-letter code: UDP-3-O-acylglucosamine N-acyltransferase (337 aa).

Histidine 238 functions as the Proton acceptor in the catalytic mechanism.

The protein belongs to the transferase hexapeptide repeat family. LpxD subfamily. As to quaternary structure, homotrimer.

It catalyses the reaction a UDP-3-O-[(3R)-3-hydroxyacyl]-alpha-D-glucosamine + a (3R)-hydroxyacyl-[ACP] = a UDP-2-N,3-O-bis[(3R)-3-hydroxyacyl]-alpha-D-glucosamine + holo-[ACP] + H(+). It functions in the pathway bacterial outer membrane biogenesis; LPS lipid A biosynthesis. Catalyzes the N-acylation of UDP-3-O-acylglucosamine using 3-hydroxyacyl-ACP as the acyl donor. Is involved in the biosynthesis of lipid A, a phosphorylated glycolipid that anchors the lipopolysaccharide to the outer membrane of the cell. The polypeptide is UDP-3-O-acylglucosamine N-acyltransferase (Xanthomonas axonopodis pv. citri (strain 306)).